The following is a 134-amino-acid chain: Profilin-4 (134 aa).

A disulfide bridge connects residues Cys-13 and Cys-118. The Involved in PIP2 interaction signature appears at 84–100; that stretch reads AVIRGKKGSGGITIKKT. At Thr-114 the chain carries Phosphothreonine.

Belongs to the profilin family. As to quaternary structure, occurs in many kinds of cells as a complex with monomeric actin in a 1:1 ratio. In terms of processing, phosphorylated by MAP kinases.

The protein resides in the cytoplasm. Its subcellular location is the cytoskeleton. Functionally, binds to actin and affects the structure of the cytoskeleton. At high concentrations, profilin prevents the polymerization of actin, whereas it enhances it at low concentrations. The sequence is that of Profilin-4 from Olea europaea (Common olive).